A 234-amino-acid chain; its full sequence is Glucosamine-6-phosphate deaminase (234 aa).

D63 serves as the catalytic Proton acceptor; for enolization step. Catalysis depends on N129, which acts as the For ring-opening step. Catalysis depends on H131, which acts as the Proton acceptor; for ring-opening step. The active-site For ring-opening step is the E136.

Belongs to the glucosamine/galactosamine-6-phosphate isomerase family. NagB subfamily.

It carries out the reaction alpha-D-glucosamine 6-phosphate + H2O = beta-D-fructose 6-phosphate + NH4(+). The protein operates within amino-sugar metabolism; N-acetylneuraminate degradation; D-fructose 6-phosphate from N-acetylneuraminate: step 5/5. Functionally, catalyzes the reversible isomerization-deamination of glucosamine 6-phosphate (GlcN6P) to form fructose 6-phosphate (Fru6P) and ammonium ion. This chain is Glucosamine-6-phosphate deaminase, found in Listeria monocytogenes serotype 4a (strain HCC23).